Here is a 120-residue protein sequence, read N- to C-terminus: Ribosome-binding factor A (120 aa).

It belongs to the RbfA family. Monomer. Binds 30S ribosomal subunits, but not 50S ribosomal subunits or 70S ribosomes.

It is found in the cytoplasm. One of several proteins that assist in the late maturation steps of the functional core of the 30S ribosomal subunit. Associates with free 30S ribosomal subunits (but not with 30S subunits that are part of 70S ribosomes or polysomes). Required for efficient processing of 16S rRNA. May interact with the 5'-terminal helix region of 16S rRNA. In Fusobacterium nucleatum subsp. nucleatum (strain ATCC 25586 / DSM 15643 / BCRC 10681 / CIP 101130 / JCM 8532 / KCTC 2640 / LMG 13131 / VPI 4355), this protein is Ribosome-binding factor A.